The sequence spans 32 residues: Photosystem II reaction center protein T (32 aa).

A helical transmembrane segment spans residues 3 to 23 (ALVYVFLLIGTLMIIFFAIFF).

This sequence belongs to the PsbT family. PSII is composed of 1 copy each of membrane proteins PsbA, PsbB, PsbC, PsbD, PsbE, PsbF, PsbH, PsbI, PsbJ, PsbK, PsbL, PsbM, PsbT, PsbY, PsbZ, Psb30/Ycf12, at least 3 peripheral proteins of the oxygen-evolving complex and a large number of cofactors. It forms dimeric complexes.

The protein localises to the plastid. Its subcellular location is the chloroplast thylakoid membrane. In terms of biological role, found at the monomer-monomer interface of the photosystem II (PS II) dimer, plays a role in assembly and dimerization of PSII. PSII is a light-driven water plastoquinone oxidoreductase, using light energy to abstract electrons from H(2)O, generating a proton gradient subsequently used for ATP formation. The polypeptide is Photosystem II reaction center protein T (Cyanidioschyzon merolae (strain NIES-3377 / 10D) (Unicellular red alga)).